The primary structure comprises 250 residues: MENTIVVKLGGVASDNLTEDFFQQIIQWQAANKKIVLVHGGGHYITKMMKSLAIPVETKNGLRVTNKATLEVTKMVLIGQVQPAITTAFQKRNISVIGLNAGDTGLLEADFLNDANLGFVGKITKVKTDLIEQLLSENIITVIAPLGINSEYDWLNVNADTAACEVASALQAEALYLLTDVPGVKKGSEIIGEIATDEIEKLQYAGVIKGGMIPKLASAAFAAENGVGKVIITDSLNTSGTKIKNKVAIG.

Residues 41 to 42 (GG), R63, and N156 contribute to the substrate site.

The protein belongs to the acetylglutamate kinase family. ArgB subfamily.

The protein localises to the cytoplasm. It catalyses the reaction N-acetyl-L-glutamate + ATP = N-acetyl-L-glutamyl 5-phosphate + ADP. Its pathway is amino-acid biosynthesis; L-arginine biosynthesis; N(2)-acetyl-L-ornithine from L-glutamate: step 2/4. In terms of biological role, catalyzes the ATP-dependent phosphorylation of N-acetyl-L-glutamate. In Listeria monocytogenes serotype 4b (strain CLIP80459), this protein is Acetylglutamate kinase.